A 246-amino-acid polypeptide reads, in one-letter code: Sulfate transporter CysZ (246 aa).

4 consecutive transmembrane segments (helical) span residues 24 to 44 (LFVL…IGFA), 69 to 89 (IVWP…FTMV), 148 to 168 (LLVL…WILF), and 214 to 234 (LLIP…ATLF).

It belongs to the CysZ family.

The protein resides in the cell inner membrane. Functionally, high affinity, high specificity proton-dependent sulfate transporter, which mediates sulfate uptake. Provides the sulfur source for the cysteine synthesis pathway. This Pseudomonas paraeruginosa (strain DSM 24068 / PA7) (Pseudomonas aeruginosa (strain PA7)) protein is Sulfate transporter CysZ.